A 133-amino-acid chain; its full sequence is ATP synthase epsilon chain (133 aa).

It belongs to the ATPase epsilon chain family. In terms of assembly, F-type ATPases have 2 components, CF(1) - the catalytic core - and CF(0) - the membrane proton channel. CF(1) has five subunits: alpha(3), beta(3), gamma(1), delta(1), epsilon(1). CF(0) has three main subunits: a, b and c.

Its subcellular location is the cell membrane. Functionally, produces ATP from ADP in the presence of a proton gradient across the membrane. This Bacillus cytotoxicus (strain DSM 22905 / CIP 110041 / 391-98 / NVH 391-98) protein is ATP synthase epsilon chain.